Reading from the N-terminus, the 60-residue chain is Metallothionein (60 aa).

M1 bears the N-acetylmethionine mark. The segment at 1–28 is beta; sequence MDPCECSKTGTCNCGGSCTCKNCSCTTC. The a divalent metal cation site is built by C4, C6, C12, C14, C18, C20, C23, C25, C28, C32, C33, C35, C36, C40, C43, C47, C49, C54, C58, and C59. The segment at 29 to 60 is alpha; that stretch reads NKSCCPCCPSGCPKCASGCVCKGKTCDTSCCQ.

Belongs to the metallothionein superfamily. Type 1 family.

Functionally, metallothioneins have a high content of cysteine residues that bind various heavy metals. The sequence is that of Metallothionein (mt) from Pleuronectes platessa (European plaice).